The primary structure comprises 1298 residues: Outer capsid protein VP1 (1298 aa).

The protein belongs to the aquareoviridae outer capsid VP1 protein family.

Its subcellular location is the virion. The enzyme catalyses a 5'-end diphospho-ribonucleoside in mRNA + GTP + H(+) = a 5'-end (5'-triphosphoguanosine)-ribonucleoside in mRNA + diphosphate. It carries out the reaction a 5'-end (5'-triphosphoguanosine)-ribonucleoside in mRNA + S-adenosyl-L-methionine = a 5'-end (N(7)-methyl 5'-triphosphoguanosine)-ribonucleoside in mRNA + S-adenosyl-L-homocysteine. Outer capsid protein involved in mRNA capping. Catalyzes the last 3 enzymatic activities for formation of the 5' cap structure on the viral plus-strand transcripts, namely the RNA guanylyltransferase, RNA-7N- and RNA-2'O-methyltransferase activities. The protein is Outer capsid protein VP1 (S1) of Ctenopharyngodon idella (Grass carp).